Here is a 113-residue protein sequence, read N- to C-terminus: Fruiting body-specific class I hydrophobin fbh1 (113 aa).

The signal sequence occupies residues 1–20 (MFSIRIATVVLAASALLAAA). Intrachain disulfides connect C33–C92, C40–C86, C41–C73, and C93–C106.

Belongs to the fungal hydrophobin family. In terms of assembly, self-assembles to form functional amyloid fibrils called rodlets. Self-assembly into fibrillar rodlets occurs spontaneously at hydrophobic:hydrophilic interfaces and the rodlets further associate laterally to form amphipathic monolayers.

It is found in the secreted. It localises to the cell wall. In terms of biological role, aerial growth, conidiation, and dispersal of filamentous fungi in the environment rely upon a capability of their secreting small amphipathic proteins called hydrophobins (HPBs) with low sequence identity. Class I can self-assemble into an outermost layer of rodlet bundles on aerial cell surfaces, conferring cellular hydrophobicity that supports fungal growth, development and dispersal; whereas Class II form highly ordered films at water-air interfaces through intermolecular interactions but contribute nothing to the rodlet structure. Fbh1 is a fruiting body-specific class I hydrophobin that is involved in the growth rate and primordia formation. The protein is Fruiting body-specific class I hydrophobin fbh1 of Pleurotus ostreatus (strain PC15) (Oyster mushroom).